The primary structure comprises 466 residues: Integrator complex subunit 12 (466 aa).

The disordered stretch occupies residues Lys41 to Met101. The span at Lys69–Leu84 shows a compositional bias: low complexity. Residues Thr85–Met101 show a composition bias toward basic and acidic residues. The PHD-type zinc-finger motif lies at Gly156–Gln212. Disordered stretches follow at residues Met216–Ala251 and Gly311–Lys466. Composition is skewed to polar residues over residues Gln218–Ser233 and Gly311–Lys329. The span at Pro338–Leu373 shows a compositional bias: low complexity. A compositionally biased stretch (polar residues) spans Ser374 to Gly386. Over residues Pro392–Asn423 the composition is skewed to low complexity. The segment covering Gln453–Lys466 has biased composition (basic residues).

It belongs to the Integrator subunit 12 family. Component of the Integrator complex, composed of core subunits INTS1, INTS2, INTS3, INTS4, INTS5, INTS6, INTS7, INTS8, INTS9/RC74, INTS10, INTS11/CPSF3L, INTS12, INTS13, INTS14 and INTS15. The core complex associates with protein phosphatase 2A subunits PPP2CA and PPP2R1A, to form the Integrator-PP2A (INTAC) complex.

It is found in the nucleus. Its function is as follows. Component of the integrator complex, a multiprotein complex that terminates RNA polymerase II (Pol II) transcription in the promoter-proximal region of genes. The integrator complex provides a quality checkpoint during transcription elongation by driving premature transcription termination of transcripts that are unfavorably configured for transcriptional elongation: the complex terminates transcription by (1) catalyzing dephosphorylation of the C-terminal domain (CTD) of Pol II subunit POLR2A/RPB1 and SUPT5H/SPT5, (2) degrading the exiting nascent RNA transcript via endonuclease activity and (3) promoting the release of Pol II from bound DNA. The integrator complex is also involved in terminating the synthesis of non-coding Pol II transcripts, such as enhancer RNAs (eRNAs), small nuclear RNAs (snRNAs), telomerase RNAs and long non-coding RNAs (lncRNAs). This is Integrator complex subunit 12 (ints12) from Xenopus tropicalis (Western clawed frog).